A 271-amino-acid polypeptide reads, in one-letter code: Putative hydro-lyase Mrad2831_3350 (271 aa).

The protein belongs to the D-glutamate cyclase family.

The polypeptide is Putative hydro-lyase Mrad2831_3350 (Methylobacterium radiotolerans (strain ATCC 27329 / DSM 1819 / JCM 2831 / NBRC 15690 / NCIMB 10815 / 0-1)).